A 1060-amino-acid polypeptide reads, in one-letter code: Outer capsid protein VP2 (1060 aa).

The protein belongs to the orbivirus VP2 family.

It localises to the virion. Functionally, the VP2 protein is one of the two proteins (with VP5) which constitute the virus particle outer capsid. It is the major target of the host immunogenic response. This chain is Outer capsid protein VP2 (Segment-2), found in Camelus dromedarius (Dromedary).